Reading from the N-terminus, the 257-residue chain is MSGKRLDGKIVIITGGASGIGAESVRLFTEHGARVVIVDVQDELGQNVAVSIGEDKASYYHCDVTNETEVENAVKFTVEKYGKLDVLFSNAGVIEPFVSILDLNLNELDRTIAINLRGTAAFIKHAARAMVEKGIRGSIVCTTSVAAEIAGTAPHGYTTSKHGLLGLIKSASGGLGKYGIRVNGVAPFGVATPLVCNGFKMEPNVVEQNTSASANLKGIVLKARHVAEAALFLASDESAYVSGQNLAVDGGYSVVKP.

12–36 (IITGGASGIGAESVRLFTEHGARVV) is a binding site for NAD(+). S144 lines the substrate pocket. The active-site Proton acceptor is Y157.

It belongs to the short-chain dehydrogenases/reductases (SDR) family.

This is Short-chain dehydrogenase reductase 3b (SDR3b) from Arabidopsis thaliana (Mouse-ear cress).